Reading from the N-terminus, the 266-residue chain is UPF0294 protein YafD (266 aa).

This sequence belongs to the UPF0294 family.

Its subcellular location is the cytoplasm. This chain is UPF0294 protein YafD, found in Salmonella paratyphi C (strain RKS4594).